Consider the following 352-residue polypeptide: MNYKIVSIPGDGIGTEVVAGAVAVLRQLEKKYGFTVEIEEHLFGGASYDVHGEMLTDATLEACKNCDAVLLGAVGGPKWENLPHEHKPEAALLKIRKELGLFANLRPAKVYDALVDASSLKADVVRGTDFVVFRELTGGIYFGQPRGYDENKGWNTMVYEKYEVERIARLAFEAARQRQGRVMSIDKANVLEVSQLWRNVVHAVHADYQDVELSDMYVDNAAMQIVRNPKQFDVIVTGNLFGDILSDISGMITGSLGMLPSASIGSKHALYEPIHGSAPDIAGQNKANPIATIASVAMMFEHSFKRTDIARDIEQAIEAALATGVRTADIAAAGDTAVSTTAMTEAIISQLK.

Gly-76–Glu-89 contacts NAD(+). Substrate-binding residues include Arg-96, Arg-106, Arg-134, and Asp-219. Mg(2+) is bound by residues Asp-219, Asp-243, and Asp-247. Gly-276–Asn-288 contacts NAD(+).

It belongs to the isocitrate and isopropylmalate dehydrogenases family. LeuB type 1 subfamily. As to quaternary structure, homodimer. Mg(2+) serves as cofactor. Mn(2+) is required as a cofactor.

The protein resides in the cytoplasm. The enzyme catalyses (2R,3S)-3-isopropylmalate + NAD(+) = 4-methyl-2-oxopentanoate + CO2 + NADH. It functions in the pathway amino-acid biosynthesis; L-leucine biosynthesis; L-leucine from 3-methyl-2-oxobutanoate: step 3/4. Functionally, catalyzes the oxidation of 3-carboxy-2-hydroxy-4-methylpentanoate (3-isopropylmalate) to 3-carboxy-4-methyl-2-oxopentanoate. The product decarboxylates to 4-methyl-2 oxopentanoate. This is 3-isopropylmalate dehydrogenase from Chlorobium chlorochromatii (strain CaD3).